The sequence spans 228 residues: 5'-methylthioadenosine/S-adenosylhomocysteine nucleosidase (228 aa).

Glu11 acts as the Proton acceptor in catalysis. Substrate is bound by residues Gly77, Ile151, and 172–173 (ME). Catalysis depends on Asp196, which acts as the Proton donor.

The protein belongs to the PNP/UDP phosphorylase family. MtnN subfamily.

It carries out the reaction S-adenosyl-L-homocysteine + H2O = S-(5-deoxy-D-ribos-5-yl)-L-homocysteine + adenine. It catalyses the reaction S-methyl-5'-thioadenosine + H2O = 5-(methylsulfanyl)-D-ribose + adenine. The catalysed reaction is 5'-deoxyadenosine + H2O = 5-deoxy-D-ribose + adenine. Its pathway is amino-acid biosynthesis; L-methionine biosynthesis via salvage pathway; S-methyl-5-thio-alpha-D-ribose 1-phosphate from S-methyl-5'-thioadenosine (hydrolase route): step 1/2. Its function is as follows. Catalyzes the irreversible cleavage of the glycosidic bond in both 5'-methylthioadenosine (MTA) and S-adenosylhomocysteine (SAH/AdoHcy) to adenine and the corresponding thioribose, 5'-methylthioribose and S-ribosylhomocysteine, respectively. Also cleaves 5'-deoxyadenosine, a toxic by-product of radical S-adenosylmethionine (SAM) enzymes, into 5-deoxyribose and adenine. The chain is 5'-methylthioadenosine/S-adenosylhomocysteine nucleosidase from Staphylococcus aureus (strain MRSA252).